A 319-amino-acid polypeptide reads, in one-letter code: CD2 antigen cytoplasmic tail-binding protein 2 homolog (319 aa).

2 disordered regions span residues 1-57 (MASK…EDDV) and 105-124 (NAFDPAKDEENSSDEEKNEP). Basic and acidic residues predominate over residues 12-24 (KVKEESFKKHTLD). Phosphoserine is present on residues serine 25 and serine 30. Over residues 25–47 (SDEEDSDDYEREYLNDSDIEGGE) the composition is skewed to acidic residues. The residue at position 37 (tyrosine 37) is a Phosphotyrosine. A Phosphoserine modification is found at serine 41. The segment covering 109–124 (PAKDEENSSDEEKNEP) has biased composition (basic and acidic residues). A GYF domain is found at 260 to 316 (EVTWEFKWSQDETDIQGPFSTEKMLKWSQENYFKNGVYVRKCGENTNFYTSNRIDFD).

The protein localises to the nucleus. In terms of biological role, required for embryonic epithelial tissue repair, but not for the assembly of the actomyosin cable at the wound edge. Probably acts downstream of rl in the regulation of Ddc and msn transcription to promote wound healing. This Drosophila melanogaster (Fruit fly) protein is CD2 antigen cytoplasmic tail-binding protein 2 homolog (holn1).